Consider the following 496-residue polypeptide: Glutamyl-tRNA(Gln) amidotransferase subunit A (496 aa).

Residues Lys75 and Ser150 each act as charge relay system in the active site. The active-site Acyl-ester intermediate is the Ser174.

It belongs to the amidase family. GatA subfamily. As to quaternary structure, heterotrimer of A, B and C subunits.

It catalyses the reaction L-glutamyl-tRNA(Gln) + L-glutamine + ATP + H2O = L-glutaminyl-tRNA(Gln) + L-glutamate + ADP + phosphate + H(+). In terms of biological role, allows the formation of correctly charged Gln-tRNA(Gln) through the transamidation of misacylated Glu-tRNA(Gln) in organisms which lack glutaminyl-tRNA synthetase. The reaction takes place in the presence of glutamine and ATP through an activated gamma-phospho-Glu-tRNA(Gln). The sequence is that of Glutamyl-tRNA(Gln) amidotransferase subunit A from Burkholderia ambifaria (strain ATCC BAA-244 / DSM 16087 / CCUG 44356 / LMG 19182 / AMMD) (Burkholderia cepacia (strain AMMD)).